A 428-amino-acid chain; its full sequence is L-lysine N6-monooxygenase MbtG (428 aa).

The first 20 residues, 1–20 (MSTLAILGAGAKAVAVAAKA), serve as a signal peptide directing secretion.

This sequence belongs to the lysine N(6)-hydroxylase/L-ornithine N(5)-oxygenase family. It depends on FAD as a cofactor.

The enzyme catalyses L-lysine + NADPH + O2 = N(6)-hydroxy-L-lysine + NADP(+) + H2O. Its pathway is siderophore biosynthesis; mycobactin biosynthesis. In terms of biological role, flavoprotein monooxygenase required for N-hydroxylation of the two acylated lysine residues during mycobactin assembly, thus producing the hydroxamate groups necessary for iron sequestration. Is also able, but less efficiently, to hydroxylate L-lysine (non acylated) in vitro. The polypeptide is L-lysine N6-monooxygenase MbtG (mbtG) (Mycolicibacterium paratuberculosis (strain ATCC BAA-968 / K-10) (Mycobacterium paratuberculosis)).